The primary structure comprises 242 residues: Adenosine 5'-phosphosulfate reductase (242 aa).

[4Fe-4S] cluster is bound by residues C125, C126, C208, and C211. Catalysis depends on C234, which acts as the Nucleophile; cysteine thiosulfonate intermediate.

Belongs to the PAPS reductase family. CysH subfamily. [4Fe-4S] cluster is required as a cofactor.

Its subcellular location is the cytoplasm. It catalyses the reaction [thioredoxin]-disulfide + sulfite + AMP + 2 H(+) = adenosine 5'-phosphosulfate + [thioredoxin]-dithiol. It functions in the pathway sulfur metabolism; hydrogen sulfide biosynthesis; sulfite from sulfate. Catalyzes the formation of sulfite from adenosine 5'-phosphosulfate (APS) using thioredoxin as an electron donor. The protein is Adenosine 5'-phosphosulfate reductase of Staphylococcus saprophyticus subsp. saprophyticus (strain ATCC 15305 / DSM 20229 / NCIMB 8711 / NCTC 7292 / S-41).